A 1055-amino-acid polypeptide reads, in one-letter code: Cellulose synthase A catalytic subunit 9 [UDP-forming] (1055 aa).

Residues 1 to 268 (MEASAGLVAG…ASSKVNPYRM (268 aa)) are Cytoplasmic-facing. Zn(2+) is bound by residues cysteine 37, cysteine 40, cysteine 56, cysteine 59, cysteine 64, cysteine 67, cysteine 79, and cysteine 82. An RING-type; degenerate zinc finger spans residues 37–83 (CEICGDEVGRTVDGDLFVACNECGFPVCRPCYEYERREGTQNCPQCK). The chain crosses the membrane as a helical span at residues 269–289 (VIILRLVVLGFFLRYRILHPV). Over 290–291 (PD) the chain is Extracellular. A helical transmembrane segment spans residues 292–312 (AIPLWLTSIICEIWFAVSWIL). Over 313 to 831 (DQFPKWYPID…LERFSYINTT (519 aa)) the chain is Cytoplasmic. UDP-alpha-D-glucose is bound by residues serine 351, lysine 357, glutamate 358, and aspartate 387. Aspartate 387 is a catalytic residue. Positions 439-468 (NFVQERRAMKREYEEFKVRINALVAKAQKV) form a coiled coil. Lysine 528 contacts UDP-alpha-D-glucose. Residues lysine 529 and aspartate 553 each coordinate Mn(2+). Aspartate 753 is a catalytic residue. A helical transmembrane segment spans residues 832 to 852 (IYPFTSLPLLAYCTLPAVCLL). Residues 853–860 (TGKFIMPP) are Extracellular-facing. Residues 861-881 (ISTFASLFFIALFISIFATGI) form a helical membrane-spanning segment. At 882-899 (LEMRWSGVSIEEWWRNEQ) the chain is on the cytoplasmic side. A helical membrane pass occupies residues 900-920 (FWVIGGVSAHLFAVVQGLLKV). Residues 921–951 (LAGIDTNFTVTSKATGDEDDEFAELYAFKWT) lie on the Extracellular side of the membrane. Asparagine 927 carries N-linked (GlcNAc...) asparagine glycosylation. The chain crosses the membrane as a helical span at residues 952–972 (TLLIPPTTLLILNIIGVVAGV). At 973-983 (SDAINNGSEAW) the chain is on the cytoplasmic side. Residues 984–1004 (GPLFGKLFFAFWVIVHLYPFL) form a helical membrane-spanning segment. The Extracellular segment spans residues 1005–1013 (KGLMGRQNR). A helical transmembrane segment spans residues 1014-1034 (TPTIVVIWSVLLASIFSLLWV). At 1035 to 1055 (RIDPFTIKARGPDVRQCGINC) the chain is on the cytoplasmic side.

This sequence belongs to the glycosyltransferase 2 family. Plant cellulose synthase subfamily. It depends on Mn(2+) as a cofactor. The cofactor is Zn(2+).

The protein localises to the cell membrane. The enzyme catalyses [(1-&gt;4)-beta-D-glucosyl](n) + UDP-alpha-D-glucose = [(1-&gt;4)-beta-D-glucosyl](n+1) + UDP + H(+). It participates in glycan metabolism; plant cellulose biosynthesis. Its function is as follows. Catalytic subunit of cellulose synthase terminal complexes ('rosettes'), required for beta-1,4-glucan microfibril crystallization, a major mechanism of the cell wall formation. Involved in the secondary cell wall formation. This Oryza sativa subsp. indica (Rice) protein is Cellulose synthase A catalytic subunit 9 [UDP-forming] (CESA9).